A 145-amino-acid chain; its full sequence is MSTPFWQSKTLDQMTEAEWESLCDGCGKCCLHKLMDEDTDEIYYTNVACSWLNSDTCSCKDYPNRFSSGEECLKLTRDKIEEFNWLPDTCAYRLLGNGQTLPEWHPLLTGSKDAMHAADESVRGKIVYEVDVIDWEDHIVLMSRD.

Belongs to the UPF0260 family.

In Vibrio cholerae serotype O1 (strain ATCC 39315 / El Tor Inaba N16961), this protein is UPF0260 protein VC_1058.